A 325-amino-acid polypeptide reads, in one-letter code: Foldase protein PrsA (325 aa).

Residues 1–20 (MKLMNKIIVPVTASALLLGA) form the signal peptide. Cys-21 carries the N-palmitoyl cysteine lipid modification. The S-diacylglycerol cysteine moiety is linked to residue Cys-21. Positions 139-245 (ENSKKASHIL…YGYHIIKADK (107 aa)) constitute a PpiC domain. Disordered stretches follow at residues 159-202 (EGLS…KKDG) and 303-325 (PDKI…NSGS).

This sequence belongs to the PrsA family.

It localises to the cell membrane. It catalyses the reaction [protein]-peptidylproline (omega=180) = [protein]-peptidylproline (omega=0). Functionally, plays a major role in protein secretion by helping the post-translocational extracellular folding of several secreted proteins. The protein is Foldase protein PrsA of Staphylococcus epidermidis (strain ATCC 12228 / FDA PCI 1200).